Consider the following 470-residue polypeptide: Dihydrolipoyl dehydrogenase (470 aa).

FAD contacts are provided by residues 39 to 47, Lys56, and Ala119; that span reads EKATLGGVC. Cys47 and Cys52 are oxidised to a cystine. NAD(+) contacts are provided by residues 183-187, Glu206, and 272-275; these read GGGYI and TVGR. FAD is bound by residues Asp315 and Ala323. The active-site Proton acceptor is the His447.

The protein belongs to the class-I pyridine nucleotide-disulfide oxidoreductase family. In terms of assembly, homodimer. Component of two multienzyme complexes: pyruvate dehydrogenase complex and oxoglutarate dehydrogenase complex. The cofactor is FAD.

The protein localises to the cytoplasm. The enzyme catalyses N(6)-[(R)-dihydrolipoyl]-L-lysyl-[protein] + NAD(+) = N(6)-[(R)-lipoyl]-L-lysyl-[protein] + NADH + H(+). In terms of biological role, catalyzes the oxidation of dihydrolipoamide to lipoamide. In Bacillus subtilis (strain 168), this protein is Dihydrolipoyl dehydrogenase (pdhD).